The sequence spans 62 residues: Small ribosomal subunit protein eS27 (62 aa).

The Zn(2+) site is built by Cys-17, Cys-20, Cys-36, and Cys-39. The C4-type zinc-finger motif lies at 17–39 (CPDCENEQLVFEKATSVVECTVC).

This sequence belongs to the eukaryotic ribosomal protein eS27 family. As to quaternary structure, part of the 30S ribosomal subunit. Zn(2+) serves as cofactor.

In Methanocorpusculum labreanum (strain ATCC 43576 / DSM 4855 / Z), this protein is Small ribosomal subunit protein eS27.